A 180-amino-acid chain; its full sequence is Inner membrane-spanning protein YciB (180 aa).

Helical transmembrane passes span 4–24 (LLSE…GGGI), 25–45 (QSAT…CYII), 49–69 (VSKL…ITLI), 76–96 (IKIK…MSGI), 118–138 (IILS…NEVV), and 150–170 (FKVF…LPLL).

This sequence belongs to the YciB family.

It is found in the cell inner membrane. In terms of biological role, plays a role in cell envelope biogenesis, maintenance of cell envelope integrity and membrane homeostasis. The protein is Inner membrane-spanning protein YciB of Rickettsia typhi (strain ATCC VR-144 / Wilmington).